A 258-amino-acid polypeptide reads, in one-letter code: MPPVTTSAVILRSIEYGDFDLIVTFFTQAQGKRAALAKNARKSFKRFGGALELFSKVSIVYAHGKKKGGLPLLSESNLEQHFSNIRMDIHKTALASLWAETIYSWAEEEHAQEEIFQLLIRSLENLDNEKVDRDKVNILFLLRFLALAGLSPSLDQCVLCCRSLEDWGQGGICFDHARGGIVCPKCGVCLAPGPVLSVGAVKQLLWLNKGDLAAAGRMKLSREAMDRGRDLLESFLAYHLGKEPKSLRFLKDLRRRHF.

This sequence belongs to the RecO family.

Involved in DNA repair and RecF pathway recombination. The chain is DNA repair protein RecO from Desulfatibacillum aliphaticivorans.